Here is a 239-residue protein sequence, read N- to C-terminus: 1-(5-phosphoribosyl)-5-[(5-phosphoribosylamino)methylideneamino] imidazole-4-carboxamide isomerase (239 aa).

D8 serves as the catalytic Proton acceptor. The active-site Proton donor is D129.

The protein belongs to the HisA/HisF family.

Its subcellular location is the cytoplasm. It carries out the reaction 1-(5-phospho-beta-D-ribosyl)-5-[(5-phospho-beta-D-ribosylamino)methylideneamino]imidazole-4-carboxamide = 5-[(5-phospho-1-deoxy-D-ribulos-1-ylimino)methylamino]-1-(5-phospho-beta-D-ribosyl)imidazole-4-carboxamide. It functions in the pathway amino-acid biosynthesis; L-histidine biosynthesis; L-histidine from 5-phospho-alpha-D-ribose 1-diphosphate: step 4/9. In Cereibacter sphaeroides (strain ATCC 17025 / ATH 2.4.3) (Rhodobacter sphaeroides), this protein is 1-(5-phosphoribosyl)-5-[(5-phosphoribosylamino)methylideneamino] imidazole-4-carboxamide isomerase.